A 179-amino-acid polypeptide reads, in one-letter code: Large ribosomal subunit protein uL5 (179 aa).

Belongs to the universal ribosomal protein uL5 family. Part of the 50S ribosomal subunit; part of the 5S rRNA/L5/L18/L25 subcomplex. Contacts the 5S rRNA and the P site tRNA. Forms a bridge to the 30S subunit in the 70S ribosome.

This is one of the proteins that bind and probably mediate the attachment of the 5S RNA into the large ribosomal subunit, where it forms part of the central protuberance. In the 70S ribosome it contacts protein S13 of the 30S subunit (bridge B1b), connecting the 2 subunits; this bridge is implicated in subunit movement. Contacts the P site tRNA; the 5S rRNA and some of its associated proteins might help stabilize positioning of ribosome-bound tRNAs. In Rickettsia akari (strain Hartford), this protein is Large ribosomal subunit protein uL5.